A 600-amino-acid polypeptide reads, in one-letter code: ATP-dependent lipid A-core flippase (600 aa).

A run of 4 helical transmembrane segments spans residues 26 to 46 (VGIFLLSIIGFVIFASTQPML), 82 to 102 (LLIVLIAAWQGLGSFLGNYFL), 167 to 187 (VFLFIYLLMMNWKLTLVMLAI), and 266 to 286 (PMLQLVIYSAMAVLMFLVLFL). An ABC transmembrane type-1 domain is found at 30–321 (LLSIIGFVIF…LSEVSSTIQK (292 aa)). One can recognise an ABC transporter domain in the interval 353–589 (LEVKNLSFFY…NGYYARLHAM (237 aa)). 387–394 (GRSGSGKS) lines the ATP pocket.

Belongs to the ABC transporter superfamily. Lipid exporter (TC 3.A.1.106) family. As to quaternary structure, homodimer.

The protein localises to the cell inner membrane. The enzyme catalyses ATP + H2O + lipid A-core oligosaccharideSide 1 = ADP + phosphate + lipid A-core oligosaccharideSide 2.. Its function is as follows. Involved in lipopolysaccharide (LPS) biosynthesis. Translocates lipid A-core from the inner to the outer leaflet of the inner membrane. Transmembrane domains (TMD) form a pore in the inner membrane and the ATP-binding domain (NBD) is responsible for energy generation. The protein is ATP-dependent lipid A-core flippase of Pseudomonas savastanoi pv. phaseolicola (strain 1448A / Race 6) (Pseudomonas syringae pv. phaseolicola (strain 1448A / Race 6)).